A 348-amino-acid polypeptide reads, in one-letter code: Anthranilate phosphoribosyltransferase (348 aa).

5-phospho-alpha-D-ribose 1-diphosphate-binding positions include Gly81, 84 to 85 (GD), 91 to 94 (NVST), 109 to 117 (KHGNRAVSG), and Ser121. Gly81 serves as a coordination point for anthranilate. Ser93 lines the Mg(2+) pocket. Asn112 is a binding site for anthranilate. Arg167 provides a ligand contact to anthranilate. Residues Asp226 and Glu227 each contribute to the Mg(2+) site.

This sequence belongs to the anthranilate phosphoribosyltransferase family. As to quaternary structure, homodimer. The cofactor is Mg(2+).

The enzyme catalyses N-(5-phospho-beta-D-ribosyl)anthranilate + diphosphate = 5-phospho-alpha-D-ribose 1-diphosphate + anthranilate. Its pathway is amino-acid biosynthesis; L-tryptophan biosynthesis; L-tryptophan from chorismate: step 2/5. In terms of biological role, catalyzes the transfer of the phosphoribosyl group of 5-phosphorylribose-1-pyrophosphate (PRPP) to anthranilate to yield N-(5'-phosphoribosyl)-anthranilate (PRA). This Ectopseudomonas mendocina (strain ymp) (Pseudomonas mendocina) protein is Anthranilate phosphoribosyltransferase.